Here is a 372-residue protein sequence, read N- to C-terminus: Lectin/endochitinase 1 (372 aa).

An N-terminal signal peptide occupies residues Met1 to Ala23. Gln24 provides a ligand contact to substrate. Gln24 carries the pyrrolidone carboxylic acid modification. Chitin-binding type-1 domains follow at residues Gln24 to Ser64 and Asp69 to Ser111. Disulfide bonds link Cys26/Cys41, Cys35/Cys47, Cys40/Cys54, and Cys58/Cys62. Ser42 to Tyr53 serves as a coordination point for substrate. Residue His70 coordinates Zn(2+). 4 disulfide bridges follow: Cys72–Cys87, Cys81–Cys93, Cys86–Cys100, and Cys105–Cys109. Position 90 (His90) interacts with Zn(2+). The tract at residues Val113–Ser128 is spacer. Asn123 carries N-linked (GlcNAc...) asparagine glycosylation. Residues Ile129–Ala372 form a chitinase region.

In terms of assembly, monomer and homodimer. Zinc favors dimerization. Active in the monomeric form but probably inactive in the dimeric form. The interaction with glycans on the mammalian TCR and MHC molecules of the T-cell and antigen-presenting cell, respectively, is inhibited by oligomers of GlcNAc. Proteolytically processed to yield a very small protein (8.5 kDa, 86 AA) containing only the two chitin-binding domains. In terms of tissue distribution, rhizomes and inflorescence with immature seeds.

The enzyme catalyses Random endo-hydrolysis of N-acetyl-beta-D-glucosaminide (1-&gt;4)-beta-linkages in chitin and chitodextrins.. In terms of biological role, functions both as a chitinase and as a N-acetyl-D-glucosamine binding lectin. Inhibits the growth of several phytopathogenic chitin-containing fungi. Also possesses insecticidal activity and superantigenic properties. The polypeptide is Lectin/endochitinase 1 (UDA1) (Urtica dioica (Great nettle)).